Reading from the N-terminus, the 876-residue chain is Leucine--tRNA ligase (876 aa).

Residues 1–20 form a disordered region; sequence MATERYNPRDAEPRWQQKWN. A 'HIGH' region motif is present at residues 43-53; the sequence is PYPSGRIHMGH. Positions 632 to 636 match the 'KMSKS' region motif; sequence KMSKS. Lys635 provides a ligand contact to ATP.

This sequence belongs to the class-I aminoacyl-tRNA synthetase family.

Its subcellular location is the cytoplasm. The catalysed reaction is tRNA(Leu) + L-leucine + ATP = L-leucyl-tRNA(Leu) + AMP + diphosphate. This Rhizobium leguminosarum bv. trifolii (strain WSM2304) protein is Leucine--tRNA ligase.